The primary structure comprises 530 residues: Plexin domain-containing protein 2 (530 aa).

A signal peptide spans 1–30 (MARFRRADLAAAGVMLLCHFLTDRFQFAHG). At 31-455 (EPGHHTNDWI…AEKKGGTLHA (425 aa)) the chain is on the extracellular side. Residues Asn103 and Asn160 are each glycosylated (N-linked (GlcNAc...) asparagine). In terms of domain architecture, PSI spans 327-372 (TCLQFNGCGPCVSSQIGFNCSWCSKLQRCSSGFDRHRQDWVDSGCP). A compositionally biased stretch (basic and acidic residues) spans 378 to 387 (KEKMCEKTEP). The segment at 378–399 (KEKMCEKTEPGETSQTTTTSHT) is disordered. Residues 390 to 399 (TSQTTTTSHT) show a composition bias toward low complexity. A helical transmembrane segment spans residues 456–476 (GLIVGILILVLIIAAAILVTV). The Cytoplasmic segment spans residues 477–530 (YMYHHPTSAASIFFIERRPSRWPAMKFRRGSGHPAYAEVEPVGEKEGFIVSEQC). Ser507 is modified (phosphoserine).

The protein belongs to the plexin family. As to quaternary structure, interacts with CTTN. As to expression, expressed in tumor endothelium and in vessels of some normal tissues, such as the muscle and lung.

It is found in the membrane. May play a role in tumor angiogenesis. The sequence is that of Plexin domain-containing protein 2 (Plxdc2) from Mus musculus (Mouse).